Reading from the N-terminus, the 465-residue chain is MTQRVRTRFAPSPTGFIHLGNIRSALYPWAFARKMKGDFILRIEDTDVERSTQEAVDVILEAMDWLGLDIDEGPFYQMQRMDRYREVIAQMVAQDLAYPCYMSTEELDALREAQRVRGEKPRYDGTWRPEPGKVLPTPPAGVQPVIRFKNPIGGSVVWDDAVKGRIEISNDELDDLVIARPDGTPTYNFCVVVDDMDMRITHVIRGDDHVNNTPRQINILRALGGTPPIYAHLPTVLNEQGEKMSKRHGAMSVTGYRDAGYLPEAVVNYLARLGWAHGDAEIFSREQFVEWFDLEHLGKSPAQYNPEKLAWLNNHYIKQADNARLAELVKPFIEALGGRVEGGPQLADVMALVKDRANTLQEVAQTALLFYRTEISVAPELAAQHLTDEVRPGIMALADKLGTLPEWKREAIGAAFKEVLGAHGWKMPKLAMPVRLLVAGQLQTPSIDAVLELFGREVVLRRLAG.

A 'HIGH' region motif is present at residues 11 to 21 (PSPTGFIHLGN). Positions 120–131 (KPRYDGTWRPEP) are enriched in basic and acidic residues. Residues 120–139 (KPRYDGTWRPEPGKVLPTPP) are disordered. Positions 243 to 247 (KMSKR) match the 'KMSKS' region motif. Residue Lys246 participates in ATP binding.

This sequence belongs to the class-I aminoacyl-tRNA synthetase family. Glutamate--tRNA ligase type 1 subfamily. As to quaternary structure, monomer.

It localises to the cytoplasm. The catalysed reaction is tRNA(Glu) + L-glutamate + ATP = L-glutamyl-tRNA(Glu) + AMP + diphosphate. Functionally, catalyzes the attachment of glutamate to tRNA(Glu) in a two-step reaction: glutamate is first activated by ATP to form Glu-AMP and then transferred to the acceptor end of tRNA(Glu). This is Glutamate--tRNA ligase from Ralstonia nicotianae (strain ATCC BAA-1114 / GMI1000) (Ralstonia solanacearum).